The following is a 385-amino-acid chain: Chaperone protein DnaJ (385 aa).

Positions 5–70 (DYYEVLGVAK…QKRAAYDRYG (66 aa)) constitute a J domain. Residues 145–223 (GFDTEIRVPS…CDGVGRTRRN (79 aa)) form a CR-type zinc finger. Zn(2+) is bound by residues Cys-158, Cys-161, Cys-175, Cys-178, Cys-197, Cys-200, Cys-211, and Cys-214. CXXCXGXG motif repeat units lie at residues 158 to 165 (CDTCHGSG), 175 to 182 (CRTCGGSG), 197 to 204 (CPTCHGTG), and 211 to 218 (CPSCDGVG).

This sequence belongs to the DnaJ family. Homodimer. The cofactor is Zn(2+).

It localises to the cytoplasm. Its function is as follows. Participates actively in the response to hyperosmotic and heat shock by preventing the aggregation of stress-denatured proteins and by disaggregating proteins, also in an autonomous, DnaK-independent fashion. Unfolded proteins bind initially to DnaJ; upon interaction with the DnaJ-bound protein, DnaK hydrolyzes its bound ATP, resulting in the formation of a stable complex. GrpE releases ADP from DnaK; ATP binding to DnaK triggers the release of the substrate protein, thus completing the reaction cycle. Several rounds of ATP-dependent interactions between DnaJ, DnaK and GrpE are required for fully efficient folding. Also involved, together with DnaK and GrpE, in the DNA replication of plasmids through activation of initiation proteins. The chain is Chaperone protein DnaJ from Bordetella pertussis (strain Tohama I / ATCC BAA-589 / NCTC 13251).